A 132-amino-acid chain; its full sequence is ATP synthase epsilon chain (132 aa).

It belongs to the ATPase epsilon chain family. As to quaternary structure, F-type ATPases have 2 components, CF(1) - the catalytic core - and CF(0) - the membrane proton channel. CF(1) has five subunits: alpha(3), beta(3), gamma(1), delta(1), epsilon(1). CF(0) has three main subunits: a, b and c.

The protein localises to the cell membrane. Functionally, produces ATP from ADP in the presence of a proton gradient across the membrane. The chain is ATP synthase epsilon chain (atpC) from Bacillus sp. (strain PS3).